Consider the following 421-residue polypeptide: O-glycoside alpha-1,2-mannosyltransferase homolog 5 (421 aa).

Glu318 acts as the Nucleophile in catalysis.

The protein belongs to the glycosyltransferase 15 family.

It localises to the cytoplasm. In terms of biological role, probable mannosyltransferase involved in O-glycosylation of cell wall and secreted proteins. The polypeptide is O-glycoside alpha-1,2-mannosyltransferase homolog 5 (omh5) (Schizosaccharomyces pombe (strain 972 / ATCC 24843) (Fission yeast)).